A 379-amino-acid chain; its full sequence is S-adenosylmethionine synthase (379 aa).

His-15 serves as a coordination point for ATP. Asp-17 is a Mg(2+) binding site. Glu-43 serves as a coordination point for K(+). Positions 56 and 99 each coordinate L-methionine. The flexible loop stretch occupies residues Gln-99–Arg-109. ATP is bound by residues Asp-164–Lys-166, Arg-230–Phe-231, Asp-239, Arg-245–Lys-246, Ala-262, and Lys-266. Asp-239 contributes to the L-methionine binding site. Lys-270 provides a ligand contact to L-methionine.

It belongs to the AdoMet synthase family. Homotetramer; dimer of dimers. Mg(2+) serves as cofactor. The cofactor is K(+).

Its subcellular location is the cytoplasm. The enzyme catalyses L-methionine + ATP + H2O = S-adenosyl-L-methionine + phosphate + diphosphate. It functions in the pathway amino-acid biosynthesis; S-adenosyl-L-methionine biosynthesis; S-adenosyl-L-methionine from L-methionine: step 1/1. In terms of biological role, catalyzes the formation of S-adenosylmethionine (AdoMet) from methionine and ATP. The overall synthetic reaction is composed of two sequential steps, AdoMet formation and the subsequent tripolyphosphate hydrolysis which occurs prior to release of AdoMet from the enzyme. In Buchnera aphidicola subsp. Schizaphis graminum (strain Sg), this protein is S-adenosylmethionine synthase.